The following is a 349-amino-acid chain: Phosphate acyltransferase (349 aa).

The protein belongs to the PlsX family. In terms of assembly, homodimer. Probably interacts with PlsY.

It is found in the cytoplasm. It carries out the reaction a fatty acyl-[ACP] + phosphate = an acyl phosphate + holo-[ACP]. The protein operates within lipid metabolism; phospholipid metabolism. Its function is as follows. Catalyzes the reversible formation of acyl-phosphate (acyl-PO(4)) from acyl-[acyl-carrier-protein] (acyl-ACP). This enzyme utilizes acyl-ACP as fatty acyl donor, but not acyl-CoA. This chain is Phosphate acyltransferase, found in Albidiferax ferrireducens (strain ATCC BAA-621 / DSM 15236 / T118) (Rhodoferax ferrireducens).